Here is a 335-residue protein sequence, read N- to C-terminus: Glycerol-3-phosphate dehydrogenase [NAD(P)+] (335 aa).

Positions 12 and 106 each coordinate NADPH. The sn-glycerol 3-phosphate site is built by Lys106, Gly136, and Ser138. Position 140 (Ala140) interacts with NADPH. Sn-glycerol 3-phosphate-binding residues include Lys191, Asp244, Ser254, Arg255, and Asn256. Lys191 acts as the Proton acceptor in catalysis. Position 255 (Arg255) interacts with NADPH. The NADPH site is built by Val279 and Glu281.

The protein belongs to the NAD-dependent glycerol-3-phosphate dehydrogenase family.

It is found in the cytoplasm. The enzyme catalyses sn-glycerol 3-phosphate + NAD(+) = dihydroxyacetone phosphate + NADH + H(+). It carries out the reaction sn-glycerol 3-phosphate + NADP(+) = dihydroxyacetone phosphate + NADPH + H(+). Its pathway is membrane lipid metabolism; glycerophospholipid metabolism. In terms of biological role, catalyzes the reduction of the glycolytic intermediate dihydroxyacetone phosphate (DHAP) to sn-glycerol 3-phosphate (G3P), the key precursor for phospholipid synthesis. This is Glycerol-3-phosphate dehydrogenase [NAD(P)+] from Fusobacterium nucleatum subsp. nucleatum (strain ATCC 25586 / DSM 15643 / BCRC 10681 / CIP 101130 / JCM 8532 / KCTC 2640 / LMG 13131 / VPI 4355).